Here is a 271-residue protein sequence, read N- to C-terminus: Calretinin (271 aa).

EF-hand domains follow at residues 16–51 (LTAS…LEKA), 63–98 (NFGE…EENF), 107–142 (GSSA…LLKK), 151–186 (KLQE…QENF), 195–230 (LTSE…LYEK), and 235–270 (MNIQ…SEPP). Ca(2+) is bound by residues Asp-29, Asp-31, Asn-33, Tyr-35, Glu-40, Asp-76, Asn-78, Asp-80, Lys-82, Glu-87, Asp-120, Asp-122, Ser-124, Tyr-126, Glu-131, Asp-164, Asn-166, Asp-168, Lys-170, Glu-175, Asp-208, Asp-210, Ser-212, Tyr-214, and Glu-219. Tyr-214 carries the phosphotyrosine modification.

This sequence belongs to the calbindin family.

Its subcellular location is the synapse. The protein localises to the cell projection. It localises to the dendrite. In terms of biological role, calcium-binding protein involved in calcium homeostasis and signal transduction. It plays a critical role in buffering intracellular calcium levels and modulating calcium-dependent signaling pathways. Predominantly expressed in specific neuronal populations, influences synaptic plasticity and neuronal excitability, contributing to learning and memory. During embryonic development, it facilitates neuronal differentiation and maturation. The sequence is that of Calretinin (Calb2) from Rattus norvegicus (Rat).